The following is an 85-amino-acid chain: MKLFLLLVISASMLIDGLVNADGYIRGSNGCKVSCLWGNEGCNKECKAFGAYYGYCWTWGLACWCQGLPDDKTWKSESNTCGGKK.

An N-terminal signal peptide occupies residues 1–21 (MKLFLLLVISASMLIDGLVNA). One can recognise an LCN-type CS-alpha/beta domain in the interval 22–82 (DGYIRGSNGC…TWKSESNTCG (61 aa)). Disulfide bonds link Cys-31–Cys-81, Cys-35–Cys-56, Cys-42–Cys-63, and Cys-46–Cys-65. Residue Gly-82 is modified to Glycine amide.

As to expression, expressed by the venom gland.

Its subcellular location is the secreted. Its function is as follows. Depressant insect beta-toxins cause a transient contraction paralysis followed by a slow flaccid paralysis. They bind voltage-independently at site-4 of sodium channels (Nav) and shift the voltage of activation toward more negative potentials thereby affecting sodium channel activation and promoting spontaneous and repetitive firing. However, this toxin has some characteristics of excitatory toxins such as bursts of activity after the membrane has been hyperpolarized. This toxin is active only on insects. This is Beta-insect depressant toxin BmKITb from Olivierus martensii (Manchurian scorpion).